The sequence spans 859 residues: ATP-dependent DNA helicase PIF1 (859 aa).

The transit peptide at 1–45 directs the protein to the mitochondrion; that stretch reads MPKWIRSTLNHIIPRRPFICSFNSFLLLKNVSHAKLSFSMSSRGF. Phosphoserine occurs at positions 70 and 72. The segment covering 142–157 has biased composition (polar residues); it reads NSFDQSSQKKSRSTGF. Residues 142-183 are disordered; sequence NSFDQSSQKKSRSTGFKNPLRPALKKESSFDELQNSSISQER. Phosphoserine is present on S169. The segment covering 172–182 has biased composition (polar residues); that stretch reads DELQNSSISQE. 258-265 contributes to the ATP binding site; it reads GSAGTGKS. S584 bears the Phosphoserine mark. Residues 727–746 mediate DNA binding; the sequence is QAYVALSRAVSREGLQVLNF. Positions 782 to 859 are disordered; that stretch reads KRKLDYAPGP…GQDTEDHILE (78 aa). Low complexity predominate over residues 800–809; that stretch reads KSNSPAPISA. The segment covering 844-859 has biased composition (basic and acidic residues); that stretch reads VSDEPRGQDTEDHILE.

It belongs to the helicase family. PIF1 subfamily. As to quaternary structure, monomer in solution. DNA binding induces dimerization. Associates with mitochondrial and telomeric DNA. Binding to mtDNA is non-specific and the protein seems to coat the entire mtDNA molecule. Binds to the telomerase RNA TLC1. Interacts with the mitochondrial single-strand DNA-binding protein RIM1. It depends on Mg(2+) as a cofactor. Requires Mn(2+) as cofactor. In terms of processing, phosphorylated. Undergoes RAD53-dependent phosphorylation in response to loss of mtDNA.

It localises to the nucleus. The protein localises to the nucleolus. It is found in the mitochondrion inner membrane. It carries out the reaction Couples ATP hydrolysis with the unwinding of duplex DNA at the replication fork by translocating in the 5'-3' direction. This creates two antiparallel DNA single strands (ssDNA). The leading ssDNA polymer is the template for DNA polymerase III holoenzyme which synthesizes a continuous strand.. The enzyme catalyses ATP + H2O = ADP + phosphate + H(+). Functionally, DNA-dependent ATPase and 5'-3' DNA helicase required for the maintenance of both mitochondrial and nuclear genome stability. Efficiently unwinds G-quadruplex (G4) DNA structures and forked RNA-DNA hybrids. Appears to move along DNA in single nucleotide or base pair steps, powered by hydrolysis of 1 molecule of ATP. Processes at an unwinding rate of about 75 bp/s. Resolves G4 structures, preventing replication pausing and double-strand breaks (DSBs) at G4 motifs. Involved in the maintenance of telomeric DNA. Inhibits telomere elongation, de novo telomere formation and telomere addition to DSBs via catalytic inhibition of telomerase. Reduces the processivity of telomerase by displacing active telomerase from DNA ends. Releases telomerase by unwinding the short telomerase RNA/telomeric DNA hybrid that is the intermediate in the telomerase reaction. Involved in the maintenance of ribosomal (rDNA). Required for efficient fork arrest at the replication fork barrier within rDNA. Involved in the maintenance of mitochondrial (mtDNA). Required to maintain mtDNA under conditions that introduce dsDNA breaks in mtDNA, either preventing or repairing dsDNA breaks. May inhibit replication progression to allow time for repair. May have a general role in chromosomal replication by affecting Okazaki fragment maturation. May have a role in conjunction with DNA2 helicase/nuclease in 5'-flap extension during Okazaki fragment processing. The chain is ATP-dependent DNA helicase PIF1 from Saccharomyces cerevisiae (strain YJM789) (Baker's yeast).